Reading from the N-terminus, the 350-residue chain is Chorismate synthase (350 aa).

R39 and R45 together coordinate NADP(+). The interval 85–104 is disordered; the sequence is KDKKVPPVTRPRPGHADLPG. FMN contacts are provided by residues 119–121, 213–214, G258, 273–277, and R299; these read RAS, QG, and KPIPT.

Belongs to the chorismate synthase family. As to quaternary structure, homotetramer. FMNH2 serves as cofactor.

It catalyses the reaction 5-O-(1-carboxyvinyl)-3-phosphoshikimate = chorismate + phosphate. Its pathway is metabolic intermediate biosynthesis; chorismate biosynthesis; chorismate from D-erythrose 4-phosphate and phosphoenolpyruvate: step 7/7. Functionally, catalyzes the anti-1,4-elimination of the C-3 phosphate and the C-6 proR hydrogen from 5-enolpyruvylshikimate-3-phosphate (EPSP) to yield chorismate, which is the branch point compound that serves as the starting substrate for the three terminal pathways of aromatic amino acid biosynthesis. This reaction introduces a second double bond into the aromatic ring system. The sequence is that of Chorismate synthase from Caldanaerobacter subterraneus subsp. tengcongensis (strain DSM 15242 / JCM 11007 / NBRC 100824 / MB4) (Thermoanaerobacter tengcongensis).